The sequence spans 269 residues: MHVITTQVLFIFCFLLLIHSIETLAYATRLSGARVGFIASALSLFNVMVIVSRMSNMVQQPFTGHLIDDAGKNALAIVGEQFRFLIFGSTVGTILGIILLPSFVALFSRAIIHLAGGGGSVFQVFRKGFSKQGFKNALSYLRLPSISYVKGFHMRLIPKRLFVINMLITSIYTIGVLSALYAGLLAPERSTTAVMASGLINGIATMLLAIFVDPKVSVLADDVAKGKRSYIYLKWTSVTMVTSRVAGTLLAQLMFIPGAYYIAWLTKWF.

The next 7 membrane-spanning stretches (helical) occupy residues 1–21, 31–51, 84–104, 105–125, 161–181, 192–212, and 245–265; these read MHVI…IHSI, SGAR…MVIV, FLIF…PSFV, ALFS…FQVF, LFVI…SALY, TAVM…AIFV, and VAGT…IAWL.

Belongs to the Amj family.

The protein localises to the cell membrane. It functions in the pathway cell wall biogenesis; peptidoglycan biosynthesis. Functionally, involved in peptidoglycan biosynthesis. Transports lipid-linked peptidoglycan precursors from the inner to the outer leaflet of the cytoplasmic membrane. May serve as a defense mechanism against naturally occurring MurJ antagonists. This is Lipid II flippase Amj from Bacillus subtilis (strain 168).